The primary structure comprises 409 residues: Tyrosine--tRNA ligase (409 aa).

The short motif at 43-52 is the 'HIGH' region element; sequence PTAPDLHLGH. The short motif at 227 to 231 is the 'KMSKS' region element; sequence KMSKS. Lysine 230 is an ATP binding site. In terms of domain architecture, S4 RNA-binding spans 338–399; it reads LALPQLLKLA…GKRKFAKVTL (62 aa).

The protein belongs to the class-I aminoacyl-tRNA synthetase family. TyrS type 2 subfamily. As to quaternary structure, homodimer.

The protein resides in the cytoplasm. The catalysed reaction is tRNA(Tyr) + L-tyrosine + ATP = L-tyrosyl-tRNA(Tyr) + AMP + diphosphate + H(+). In terms of biological role, catalyzes the attachment of tyrosine to tRNA(Tyr) in a two-step reaction: tyrosine is first activated by ATP to form Tyr-AMP and then transferred to the acceptor end of tRNA(Tyr). The sequence is that of Tyrosine--tRNA ligase from Nitrosomonas europaea (strain ATCC 19718 / CIP 103999 / KCTC 2705 / NBRC 14298).